The chain runs to 272 residues: Exosome complex component MTR3 (272 aa).

The tract at residues 1-36 (MPGDHRRIRGPEESQPPQLYAADEEEAPGTRDPTRL) is disordered.

The protein belongs to the RNase PH family. Component of the RNA exosome core complex (Exo-9), composed of EXOSC1, EXOSC2, EXOSC3, EXOSC4, EXOSC5, EXOSC6, EXOSC7, EXOSC8 and EXOSC9; within the complex interacts with EXOSC1, EXOSC7 and EXOSC8. The catalytically inactive Exo-9 may associate with the catalytic subunit EXOSC10/RRP6. Exo-9 may associate with DIS3 to form the nucleolar exosome complex, or DIS3L to form the cytoplasmic exosome complex. Exo-9 is formed by a hexameric base ring consisting of the heterodimers EXOSC4-EXOSC9, EXOSC5-EXOSC8 and EXOSC6-EXOSC7, and a cap ring consisting of EXOSC1, EXOSC2 and EXOSC3. The RNA exosome complex associates with cofactors EXOSC10/RRP6, C1D/RRP47, MPHOSPH6/MPP6 and MTREX/MTR4.

Its subcellular location is the cytoplasm. It localises to the nucleus. It is found in the nucleolus. Its function is as follows. Non-catalytic component of the RNA exosome complex which has 3'-&gt;5' exoribonuclease activity and participates in a multitude of cellular RNA processing and degradation events. In the nucleus, the RNA exosome complex is involved in proper maturation of stable RNA species such as rRNA, snRNA and snoRNA, in the elimination of RNA processing by-products and non-coding 'pervasive' transcripts, such as antisense RNA species and promoter-upstream transcripts (PROMPTs), and of mRNAs with processing defects, thereby limiting or excluding their export to the cytoplasm. The RNA exosome may be involved in Ig class switch recombination (CSR) and/or Ig variable region somatic hypermutation (SHM) by targeting AICDA deamination activity to transcribed dsDNA substrates. In the cytoplasm, the RNA exosome complex is involved in general mRNA turnover and specifically degrades inherently unstable mRNAs containing AU-rich elements (AREs) within their 3' untranslated regions, and in RNA surveillance pathways, preventing translation of aberrant mRNAs. It seems to be involved in degradation of histone mRNA. The catalytic inactive RNA exosome core complex of 9 subunits (Exo-9) is proposed to play a pivotal role in the binding and presentation of RNA for ribonucleolysis, and to serve as a scaffold for the association with catalytic subunits and accessory proteins or complexes. This Homo sapiens (Human) protein is Exosome complex component MTR3 (EXOSC6).